A 270-amino-acid chain; its full sequence is Sulfur carrier protein FdhD (270 aa).

Cys-116 functions as the Cysteine persulfide intermediate in the catalytic mechanism. A Mo-bis(molybdopterin guanine dinucleotide)-binding site is contributed by 253–258; sequence FAREGK.

The protein belongs to the FdhD family.

The protein resides in the cytoplasm. Required for formate dehydrogenase (FDH) activity. Acts as a sulfur carrier protein that transfers sulfur from IscS to the molybdenum cofactor prior to its insertion into FDH. The sequence is that of Sulfur carrier protein FdhD from Haemophilus influenzae (strain ATCC 51907 / DSM 11121 / KW20 / Rd).